Consider the following 722-residue polypeptide: Polyribonucleotide nucleotidyltransferase (722 aa).

Positions 498 and 504 each coordinate Mg(2+). Positions 565–624 (PQFHTMKIDPDKIRDIIGKGGATIRSITEETGASIDIDDNGTIKIYADDGDGMQAAIARI) constitute a KH domain. Residues 634–702 (GAVYQGKVVR…QRGRIKLSIK (69 aa)) form the S1 motif domain.

Belongs to the polyribonucleotide nucleotidyltransferase family. Component of the RNA degradosome, which is a multiprotein complex involved in RNA processing and mRNA degradation. Mg(2+) serves as cofactor.

Its subcellular location is the cytoplasm. The catalysed reaction is RNA(n+1) + phosphate = RNA(n) + a ribonucleoside 5'-diphosphate. Involved in mRNA degradation. Catalyzes the phosphorolysis of single-stranded polyribonucleotides processively in the 3'- to 5'-direction. The sequence is that of Polyribonucleotide nucleotidyltransferase from Saccharophagus degradans (strain 2-40 / ATCC 43961 / DSM 17024).